The chain runs to 668 residues: tRNA 5-methylaminomethyl-2-thiouridine biosynthesis bifunctional protein MnmC (668 aa).

The segment at 1 to 245 is tRNA (mnm(5)s(2)U34)-methyltransferase; that stretch reads MKHYAIQPAN…KREMLCGVME (245 aa). The FAD-dependent cmnm(5)s(2)U34 oxidoreductase stretch occupies residues 270 to 668; that stretch reads IGGGIASALL…LLKGKAVKAG (399 aa).

This sequence in the N-terminal section; belongs to the methyltransferase superfamily. tRNA (mnm(5)s(2)U34)-methyltransferase family. The protein in the C-terminal section; belongs to the DAO family. FAD serves as cofactor.

Its subcellular location is the cytoplasm. The catalysed reaction is 5-aminomethyl-2-thiouridine(34) in tRNA + S-adenosyl-L-methionine = 5-methylaminomethyl-2-thiouridine(34) in tRNA + S-adenosyl-L-homocysteine + H(+). In terms of biological role, catalyzes the last two steps in the biosynthesis of 5-methylaminomethyl-2-thiouridine (mnm(5)s(2)U) at the wobble position (U34) in tRNA. Catalyzes the FAD-dependent demodification of cmnm(5)s(2)U34 to nm(5)s(2)U34, followed by the transfer of a methyl group from S-adenosyl-L-methionine to nm(5)s(2)U34, to form mnm(5)s(2)U34. The polypeptide is tRNA 5-methylaminomethyl-2-thiouridine biosynthesis bifunctional protein MnmC (Escherichia coli (strain SMS-3-5 / SECEC)).